The following is a 346-amino-acid chain: Uroporphyrinogen decarboxylase (346 aa).

Substrate is bound by residues 26-30, aspartate 76, tyrosine 153, serine 208, and histidine 323; that span reads RQAGR.

The protein belongs to the uroporphyrinogen decarboxylase family. As to quaternary structure, homodimer.

It is found in the cytoplasm. The catalysed reaction is uroporphyrinogen III + 4 H(+) = coproporphyrinogen III + 4 CO2. It functions in the pathway porphyrin-containing compound metabolism; protoporphyrin-IX biosynthesis; coproporphyrinogen-III from 5-aminolevulinate: step 4/4. In terms of biological role, catalyzes the decarboxylation of four acetate groups of uroporphyrinogen-III to yield coproporphyrinogen-III. This chain is Uroporphyrinogen decarboxylase, found in Prochlorococcus marinus (strain MIT 9301).